A 715-amino-acid chain; its full sequence is Fatty acid oxidation complex subunit alpha (715 aa).

The segment at 1 to 190 (MTTTSAFMLN…KAGLVDDVVP (190 aa)) is enoyl-CoA hydratase. Residues 306–715 (GPLNSVGILG…WTNGETDQGN (410 aa)) form a 3-hydroxyacyl-CoA dehydrogenase region.

In the N-terminal section; belongs to the enoyl-CoA hydratase/isomerase family. The protein in the central section; belongs to the 3-hydroxyacyl-CoA dehydrogenase family. In terms of assembly, heterotetramer of two alpha chains (FadJ) and two beta chains (FadI).

It localises to the cytoplasm. It catalyses the reaction a (3S)-3-hydroxyacyl-CoA = a (2E)-enoyl-CoA + H2O. The enzyme catalyses a 4-saturated-(3S)-3-hydroxyacyl-CoA = a (3E)-enoyl-CoA + H2O. It carries out the reaction a (3S)-3-hydroxyacyl-CoA + NAD(+) = a 3-oxoacyl-CoA + NADH + H(+). The catalysed reaction is (3S)-3-hydroxybutanoyl-CoA = (3R)-3-hydroxybutanoyl-CoA. The protein operates within lipid metabolism; fatty acid beta-oxidation. Catalyzes the formation of a hydroxyacyl-CoA by addition of water on enoyl-CoA. Also exhibits 3-hydroxyacyl-CoA epimerase and 3-hydroxyacyl-CoA dehydrogenase activities. In Salmonella enteritidis PT4 (strain P125109), this protein is Fatty acid oxidation complex subunit alpha.